A 38-amino-acid chain; its full sequence is Potassium channel toxin alpha-KTx 3.7 (38 aa).

3 disulfide bridges follow: C8/C28, C14/C33, and C18/C35.

The protein belongs to the short scorpion toxin superfamily. Potassium channel inhibitor family. Alpha-KTx 03 subfamily. In terms of tissue distribution, expressed by the venom gland.

The protein localises to the secreted. Functionally, blocks voltage-gated potassium channels Kv1.1/KCNA1 (IC(50)=0.6 nM), Kv1.2/KCNA2 (IC(50)=5.4 nM), Kv1.3/KCNA3 (IC(50)=0.014 nM) potently, and moderately block intermediate conductance calcium-activated potassium channels KCa3.1/KCNN4 (IC(50)=225 nM). Also shows activity on muscle-type nicotinic acetylcholine receptor (nAChR), since it reversibly and dose-dependently inhibits acetylcholine-induced current through mouse muscle-type nAChR heterologously expressed in Xenopus oocytes (IC(50)=1.6 uM). This chain is Potassium channel toxin alpha-KTx 3.7, found in Orthochirus scrobiculosus (Central Asian scorpion).